Reading from the N-terminus, the 148-residue chain is Nucleoside diphosphate kinase (148 aa).

ATP contacts are provided by Lys9, Phe57, Arg85, Thr91, Arg102, and Asn112. Thr91 carries the post-translational modification Phosphothreonine. Residue His115 is the Pros-phosphohistidine intermediate of the active site. Ser122 carries the post-translational modification Phosphoserine.

Belongs to the NDK family. As to quaternary structure, homotetramer. It depends on Mg(2+) as a cofactor.

It is found in the cytoplasm. It carries out the reaction a 2'-deoxyribonucleoside 5'-diphosphate + ATP = a 2'-deoxyribonucleoside 5'-triphosphate + ADP. The catalysed reaction is a ribonucleoside 5'-diphosphate + ATP = a ribonucleoside 5'-triphosphate + ADP. Functionally, major role in the synthesis of nucleoside triphosphates other than ATP. The ATP gamma phosphate is transferred to the NDP beta phosphate via a ping-pong mechanism, using a phosphorylated active-site intermediate. This Bacillus licheniformis (strain ATCC 14580 / DSM 13 / JCM 2505 / CCUG 7422 / NBRC 12200 / NCIMB 9375 / NCTC 10341 / NRRL NRS-1264 / Gibson 46) protein is Nucleoside diphosphate kinase.